The primary structure comprises 627 residues: uncharacterized protein (627 aa).

This is an uncharacterized protein from Caenorhabditis elegans.